Here is a 345-residue protein sequence, read N- to C-terminus: L-rhamnose-proton symporter (345 aa).

10 consecutive transmembrane segments (helical) span residues 4–24, 38–58, 68–88, 101–121, 131–151, 175–195, 214–234, 259–279, 290–310, and 323–343; these read AITM…CFYA, WSVG…ALLL, FSAA…IGNI, MGIG…TPLL, TAGG…VAIV, LVLA…MDAA, LPSY…FCFI, VLLS…YAWG, ISWM…GLLL, and VLSL…LGMA.

It belongs to the L-rhamnose transporter (TC 2.A.7.6) family.

The protein resides in the cell inner membrane. It carries out the reaction L-rhamnopyranose(in) + H(+)(in) = L-rhamnopyranose(out) + H(+)(out). Uptake of L-rhamnose across the cytoplasmic membrane with the concomitant transport of protons into the cell (symport system). In Cronobacter sakazakii (strain ATCC BAA-894) (Enterobacter sakazakii), this protein is L-rhamnose-proton symporter.